The following is a 481-amino-acid chain: Ribosomal protein uS12 methylthiotransferase RimO (481 aa).

Residues 38 to 148 enclose the MTTase N-terminal domain; the sequence is NRIGFVSLGC…VLKHVHKYVP (111 aa). Positions 47, 83, 112, 180, 184, and 187 each coordinate [4Fe-4S] cluster. The region spanning 166-403 is the Radical SAM core domain; that stretch reads LTPKHYAYLK…MEVQAEISAE (238 aa). Residues 406–472 form the TRAM domain; it reads ARFVGRTMDI…EHDLWAELVD (67 aa).

This sequence belongs to the methylthiotransferase family. RimO subfamily. [4Fe-4S] cluster serves as cofactor.

It localises to the cytoplasm. It catalyses the reaction L-aspartate(89)-[ribosomal protein uS12]-hydrogen + (sulfur carrier)-SH + AH2 + 2 S-adenosyl-L-methionine = 3-methylsulfanyl-L-aspartate(89)-[ribosomal protein uS12]-hydrogen + (sulfur carrier)-H + 5'-deoxyadenosine + L-methionine + A + S-adenosyl-L-homocysteine + 2 H(+). Its function is as follows. Catalyzes the methylthiolation of an aspartic acid residue of ribosomal protein uS12. The protein is Ribosomal protein uS12 methylthiotransferase RimO of Shewanella oneidensis (strain ATCC 700550 / JCM 31522 / CIP 106686 / LMG 19005 / NCIMB 14063 / MR-1).